The chain runs to 251 residues: Imidazole glycerol phosphate synthase subunit HisF (251 aa).

Active-site residues include Asp-11 and Asp-130.

Belongs to the HisA/HisF family. As to quaternary structure, heterodimer of HisH and HisF.

The protein localises to the cytoplasm. The enzyme catalyses 5-[(5-phospho-1-deoxy-D-ribulos-1-ylimino)methylamino]-1-(5-phospho-beta-D-ribosyl)imidazole-4-carboxamide + L-glutamine = D-erythro-1-(imidazol-4-yl)glycerol 3-phosphate + 5-amino-1-(5-phospho-beta-D-ribosyl)imidazole-4-carboxamide + L-glutamate + H(+). The protein operates within amino-acid biosynthesis; L-histidine biosynthesis; L-histidine from 5-phospho-alpha-D-ribose 1-diphosphate: step 5/9. In terms of biological role, IGPS catalyzes the conversion of PRFAR and glutamine to IGP, AICAR and glutamate. The HisF subunit catalyzes the cyclization activity that produces IGP and AICAR from PRFAR using the ammonia provided by the HisH subunit. The protein is Imidazole glycerol phosphate synthase subunit HisF of Chloroherpeton thalassium (strain ATCC 35110 / GB-78).